A 452-amino-acid polypeptide reads, in one-letter code: Isocitrate dehydrogenase [NADP], mitochondrial (452 aa).

The transit peptide at 1 to 39 (MAGYLRAVSSLCRASGSTRTWAPAALNVPSWPEQPRRHY) directs the protein to the mitochondrion. Residues K45, K48, K67, and K69 each carry the N6-acetyllysine modification. An N6-acetyllysine; alternate mark is found at K80 and K106. 2 positions are modified to N6-succinyllysine; alternate: K80 and K106. Residues 115–117 (TIT) and R122 contribute to the NADP(+) site. Residue T117 coordinates D-threo-isocitrate. D-threo-isocitrate-binding positions include 134 to 140 (SPNGTIR) and R149. K155 is subject to N6-acetyllysine. Position 166 is an N6-acetyllysine; alternate (K166). K166 bears the N6-succinyllysine; alternate mark. R172 is a binding site for D-threo-isocitrate. 2 positions are modified to N6-acetyllysine; alternate: K180 and K193. N6-succinyllysine; alternate is present on residues K180 and K193. N6-acetyllysine is present on K199. An N6-acetyllysine; alternate modification is found at K256. K256 bears the N6-succinyllysine; alternate mark. Residues K263, K272, K275, and K280 each carry the N6-acetyllysine modification. K282 carries the N6-acetyllysine; alternate modification. K282 is subject to N6-succinyllysine; alternate. D291 contributes to the Mn(2+) binding site. Residue K299 participates in NADP(+) binding. D314 serves as a coordination point for Mn(2+). NADP(+) is bound by residues 349–354 (GTVTRH) and N367. K384 is modified (N6-acetyllysine; alternate). Residue K384 is modified to N6-succinyllysine; alternate. An N6-acetyllysine mark is found at K400, K413, and K442.

The protein belongs to the isocitrate and isopropylmalate dehydrogenases family. In terms of assembly, homodimer. The cofactor is Mg(2+). Mn(2+) is required as a cofactor. In terms of processing, acetylation at Lys-413 dramatically reduces catalytic activity. Deacetylated by SIRT3.

The protein resides in the mitochondrion. It catalyses the reaction D-threo-isocitrate + NADP(+) = 2-oxoglutarate + CO2 + NADPH. Its function is as follows. Plays a role in intermediary metabolism and energy production. It may tightly associate or interact with the pyruvate dehydrogenase complex. The protein is Isocitrate dehydrogenase [NADP], mitochondrial (Idh2) of Rattus norvegicus (Rat).